The chain runs to 204 residues: Crossover junction endodeoxyribonuclease RuvC (204 aa).

Residues Asp7, Glu68, and Asp141 contribute to the active site. 3 residues coordinate Mg(2+): Asp7, Glu68, and Asp141. Positions 164–204 are disordered; the sequence is QAVAAHRTSGASRTPGAAGTPGPSRTPGAPGTSRTLKGRTA.

The protein belongs to the RuvC family. As to quaternary structure, homodimer which binds Holliday junction (HJ) DNA. The HJ becomes 2-fold symmetrical on binding to RuvC with unstacked arms; it has a different conformation from HJ DNA in complex with RuvA. In the full resolvosome a probable DNA-RuvA(4)-RuvB(12)-RuvC(2) complex forms which resolves the HJ. It depends on Mg(2+) as a cofactor.

It is found in the cytoplasm. The catalysed reaction is Endonucleolytic cleavage at a junction such as a reciprocal single-stranded crossover between two homologous DNA duplexes (Holliday junction).. Its function is as follows. The RuvA-RuvB-RuvC complex processes Holliday junction (HJ) DNA during genetic recombination and DNA repair. Endonuclease that resolves HJ intermediates. Cleaves cruciform DNA by making single-stranded nicks across the HJ at symmetrical positions within the homologous arms, yielding a 5'-phosphate and a 3'-hydroxyl group; requires a central core of homology in the junction. The consensus cleavage sequence is 5'-(A/T)TT(C/G)-3'. Cleavage occurs on the 3'-side of the TT dinucleotide at the point of strand exchange. HJ branch migration catalyzed by RuvA-RuvB allows RuvC to scan DNA until it finds its consensus sequence, where it cleaves and resolves the cruciform DNA. The sequence is that of Crossover junction endodeoxyribonuclease RuvC from Streptomyces griseus subsp. griseus (strain JCM 4626 / CBS 651.72 / NBRC 13350 / KCC S-0626 / ISP 5235).